The chain runs to 163 residues: Small ribosomal subunit protein uS5 (163 aa).

The 64-residue stretch at 8 to 71 (LIEKIVYLNR…EKARKEMISV (64 aa)) folds into the S5 DRBM domain.

It belongs to the universal ribosomal protein uS5 family. Part of the 30S ribosomal subunit. Contacts proteins S4 and S8.

Functionally, with S4 and S12 plays an important role in translational accuracy. Its function is as follows. Located at the back of the 30S subunit body where it stabilizes the conformation of the head with respect to the body. The sequence is that of Small ribosomal subunit protein uS5 from Maridesulfovibrio salexigens (strain ATCC 14822 / DSM 2638 / NCIMB 8403 / VKM B-1763) (Desulfovibrio salexigens).